Consider the following 1051-residue polypeptide: Protein transport protein Sec16B (1051 aa).

The span at 1–23 (MEPWVPQTQGRTTGPSRDTNRGL) shows a compositional bias: polar residues. Residues 1-109 (MEPWVPQTQG…PYQRYHTPTP (109 aa)) are disordered. A compositionally biased stretch (basic and acidic residues) spans 39–63 (DKYHQWQDAHKNSKSQQDLRDDHQQ). Polar residues predominate over residues 64–77 (SHSVSRSGEWSQPV). Phosphoserine is present on residues Ser-70 and Ser-137. The disordered stretch occupies residues 157–203 (EKHNGTFGANSDTQFQFTSKNPYRDSPASVSGQEQPGEFFPESEAQK). Residues 163–177 (FGANSDTQFQFTSKN) show a composition bias toward polar residues. Residues Ser-182, Ser-185, and Ser-245 each carry the phosphoserine modification. The interval 263–708 (APMRFYVPHV…KHKDLEQNRT (446 aa)) is central conserved domain (CCD); required for localization to endoplasmic reticulum exit sites. Over residues 703–715 (LEQNRTGAPRDPD) the composition is skewed to basic and acidic residues. Disordered stretches follow at residues 703 to 754 (LEQN…LWST), 798 to 820 (SGASGSSVAVTGTPGGRVGEDML), and 850 to 1051 (TPAA…TQPC). The span at 737–754 (GHQNYSEDSEYSSTLWST) shows a compositional bias: polar residues. Positions 798 to 809 (SGASGSSVAVTG) are enriched in low complexity. Thr-850 bears the Phosphothreonine mark. Residues Ser-860, Ser-863, Ser-866, Ser-874, and Ser-875 each carry the phosphoserine modification. The segment covering 877–897 (GADKPSHPDASQKGKLGDGKN) has biased composition (basic and acidic residues). A compositionally biased stretch (low complexity) spans 900-920 (SSGFGWFSWFRSKPASSVSTS). Positions 921-932 (GDEDSSDSSDSE) are enriched in acidic residues. Over residues 936 to 947 (RASSPHHASPGL) the composition is skewed to low complexity. Residues 984 to 993 (EGMGIGGFSG) show a composition bias toward gly residues. Positions 1022-1037 (NPSQVPQLPTASSLNR) are enriched in polar residues.

Belongs to the SEC16 family. SEC16A and SEC16B are each present in multiple copies in a heteromeric complex. Interacts with TFG. Interacts with SEC13. In terms of tissue distribution, liver.

Its subcellular location is the endoplasmic reticulum membrane. The protein resides in the golgi apparatus membrane. Its function is as follows. Plays a role in the organization of the endoplasmic reticulum exit sites (ERES), also known as transitional endoplasmic reticulum (tER). Required for secretory cargo traffic from the endoplasmic reticulum to the Golgi apparatus. Involved in peroxisome biogenesis. Regulates the transport of peroxisomal biogenesis factors PEX3 and PEX16 from the ER to peroxisomes. The protein is Protein transport protein Sec16B (Sec16b) of Mus musculus (Mouse).